The sequence spans 243 residues: Large ribosomal subunit protein uL2 (243 aa).

Disordered regions lie at residues 1–23 (MGKR…PSHR) and 204–243 (PFGG…GGRR). Over residues 228-243 (KVGHIAARKTGRGGRR) the composition is skewed to basic residues.

The protein belongs to the universal ribosomal protein uL2 family. Part of the 50S ribosomal subunit. Forms a bridge to the 30S subunit in the 70S ribosome.

Its function is as follows. One of the primary rRNA binding proteins. Required for association of the 30S and 50S subunits to form the 70S ribosome, for tRNA binding and peptide bond formation. It has been suggested to have peptidyltransferase activity; this is somewhat controversial. Makes several contacts with the 16S rRNA in the 70S ribosome. This Methanopyrus kandleri (strain AV19 / DSM 6324 / JCM 9639 / NBRC 100938) protein is Large ribosomal subunit protein uL2.